A 445-amino-acid polypeptide reads, in one-letter code: 3-phosphoshikimate 1-carboxyvinyltransferase (445 aa).

3 residues coordinate 3-phosphoshikimate: lysine 21, serine 22, and arginine 26. Lysine 21 is a phosphoenolpyruvate binding site. Positions 92 and 120 each coordinate phosphoenolpyruvate. Serine 165, glutamine 166, aspartate 307, and lysine 334 together coordinate 3-phosphoshikimate. Glutamine 166 lines the phosphoenolpyruvate pocket. The active-site Proton acceptor is aspartate 307. Positions 338, 379, and 405 each coordinate phosphoenolpyruvate.

It belongs to the EPSP synthase family. In terms of assembly, monomer.

Its subcellular location is the cytoplasm. It carries out the reaction 3-phosphoshikimate + phosphoenolpyruvate = 5-O-(1-carboxyvinyl)-3-phosphoshikimate + phosphate. It functions in the pathway metabolic intermediate biosynthesis; chorismate biosynthesis; chorismate from D-erythrose 4-phosphate and phosphoenolpyruvate: step 6/7. Catalyzes the transfer of the enolpyruvyl moiety of phosphoenolpyruvate (PEP) to the 5-hydroxyl of shikimate-3-phosphate (S3P) to produce enolpyruvyl shikimate-3-phosphate and inorganic phosphate. This is 3-phosphoshikimate 1-carboxyvinyltransferase from Chlamydia abortus (strain DSM 27085 / S26/3) (Chlamydophila abortus).